Reading from the N-terminus, the 508-residue chain is Histidine ammonia-lyase (508 aa).

The segment at residues 141-143 (ASG) is a cross-link (5-imidazolinone (Ala-Gly)). A 2,3-didehydroalanine (Ser) modification is found at Ser142.

It belongs to the PAL/histidase family. Post-translationally, contains an active site 4-methylidene-imidazol-5-one (MIO), which is formed autocatalytically by cyclization and dehydration of residues Ala-Ser-Gly.

The protein localises to the cytoplasm. It catalyses the reaction L-histidine = trans-urocanate + NH4(+). It participates in amino-acid degradation; L-histidine degradation into L-glutamate; N-formimidoyl-L-glutamate from L-histidine: step 1/3. In Geobacillus sp. (strain WCH70), this protein is Histidine ammonia-lyase.